Consider the following 122-residue polypeptide: Large ribosomal subunit protein uL18 (122 aa).

The protein belongs to the universal ribosomal protein uL18 family. Part of the 50S ribosomal subunit; part of the 5S rRNA/L5/L18/L25 subcomplex. Contacts the 5S and 23S rRNAs.

In terms of biological role, this is one of the proteins that bind and probably mediate the attachment of the 5S RNA into the large ribosomal subunit, where it forms part of the central protuberance. This Kosmotoga olearia (strain ATCC BAA-1733 / DSM 21960 / TBF 19.5.1) protein is Large ribosomal subunit protein uL18.